Here is a 417-residue protein sequence, read N- to C-terminus: RH-like protein IC (417 aa).

A run of 11 helical transmembrane segments spans residues 12 to 32 (CLPLCALTLEAALILLFYFFT), 44 to 64 (LVASYQVGQDLTVMAAIGFGF), 77 to 97 (VAFNLFMLALGVQWAILLDGF), 125 to 145 (ISAGAVLGYVNLVQLVVMVLV), 172 to 192 (FYVFAAYFGVTVAWCLPKPLP), 203 to 223 (TIPSLSAMLGTLFLWMFWPSF), 238 to 258 (VFNTYYALAVSVVTAISVSSL), 265 to 285 (INMTYMHNAVLAGGVAVGTSC), 287 to 307 (LITSPWLAMVLGLVAGLISIG), 331 to 351 (NFSLLGLLGEITYIVLMVLHT), and 358 to 378 (MVGFQVLVSTGELSLALAIAV).

The protein belongs to the ammonium transporter (TC 2.A.49) family. Rh subfamily.

The protein localises to the membrane. Functionally, may be part of an oligomeric complex which is likely to have a transport or channel function in the erythrocyte membrane. This is RH-like protein IC from Gorilla gorilla gorilla (Western lowland gorilla).